A 485-amino-acid chain; its full sequence is Transcription factor E2FA (485 aa).

The segment covering 1–11 has biased composition (low complexity); it reads MSGVVRSSPGS. 2 disordered regions span residues 1-69 and 114-159; these read MSGV…SNNN and SGFT…SPIT. Pro residues predominate over residues 12–26; the sequence is SQPPPPPPHHPPSSP. The span at 114–125 shows a compositional bias: polar residues; that stretch reads SGFTNIPSSPCQ. Positions 129-141 are enriched in basic residues; that stretch reads KGGRVNIKSKAKG. Residues 142 to 159 are compositionally biased toward polar residues; the sequence is NKSTPQTPISTNAGSPIT. The DNA-binding element occupies 167 to 232; it reads RYDSSLGLLT…PFKNRILWKG (66 aa). Positions 245–286 form a coiled coil; the sequence is SVLQLQAEIENLALEEQALDNQIRQTEERLRDLSENEKNQKW. The interval 249–277 is leucine-zipper; the sequence is LQAEIENLALEEQALDNQIRQTEERLRDL. Positions 435–450 are retinoblastoma protein binding; it reads DYWLLSNAEISMTDIW.

The protein belongs to the E2F/DP family. Heterodimer with DP proteins. Interacts (via dimerization domain) preferentially with DPA, but also with DPB. Interacts with maize retinoblastoma-related protein RBR1. No interaction with E2FD. Highly expressed in the shoot apical meristem, emerging leaf primordia, and vascular tissues of young leaf primordia. Expressed in flowers, in epidermis and cortex of hypocotyls, and at lower levels in leaves.

It localises to the cytoplasm. Its subcellular location is the nucleus. Functionally, transcription activator that binds DNA cooperatively with DP proteins through the E2 recognition site, 5'-TTTC[CG]CGC-3' found in the promoter region of a number of genes whose products are involved in cell cycle regulation or in DNA replication. The binding of retinoblastoma-related proteins represses transactivation. Regulates gene expression both positively and negatively. Activates the expression of E2FB. Involved in the control of cell-cycle progression from G1 to S phase. Stimulates cell proliferation and delays differentiation. The chain is Transcription factor E2FA (E2FA) from Arabidopsis thaliana (Mouse-ear cress).